The following is a 226-amino-acid chain: Triosephosphate isomerase (226 aa).

Position 13 to 15 (asparagine 13 to lysine 15) interacts with substrate. Histidine 97 functions as the Electrophile in the catalytic mechanism. The active-site Proton acceptor is the glutamate 145. Substrate is bound by residues isoleucine 150, glycine 185, and alanine 206 to serine 207.

This sequence belongs to the triosephosphate isomerase family. As to quaternary structure, homotetramer; dimer of dimers.

The protein localises to the cytoplasm. The catalysed reaction is D-glyceraldehyde 3-phosphate = dihydroxyacetone phosphate. It participates in carbohydrate biosynthesis; gluconeogenesis. Its pathway is carbohydrate degradation; glycolysis; D-glyceraldehyde 3-phosphate from glycerone phosphate: step 1/1. In terms of biological role, involved in the gluconeogenesis. Catalyzes stereospecifically the conversion of dihydroxyacetone phosphate (DHAP) to D-glyceraldehyde-3-phosphate (G3P). The sequence is that of Triosephosphate isomerase from Methanobacterium bryantii.